Here is a 56-residue protein sequence, read N- to C-terminus: Large ribosomal subunit protein bL33 (56 aa).

It belongs to the bacterial ribosomal protein bL33 family.

This chain is Large ribosomal subunit protein bL33, found in Actinobacillus pleuropneumoniae serotype 5b (strain L20).